The primary structure comprises 523 residues: 2-isopropylmalate synthase (523 aa).

The 263-residue stretch at 5 to 267 folds into the Pyruvate carboxyltransferase domain; the sequence is VIIFDTTLRD…HTNINHHEIW (263 aa). Residues Asp14, His202, His204, and Asn238 each contribute to the Mn(2+) site. The tract at residues 392–523 is regulatory domain; the sequence is RLDYFNVQSG…QNKENNKETV (132 aa).

Belongs to the alpha-IPM synthase/homocitrate synthase family. LeuA type 1 subfamily. Homodimer. Mn(2+) serves as cofactor.

Its subcellular location is the cytoplasm. The enzyme catalyses 3-methyl-2-oxobutanoate + acetyl-CoA + H2O = (2S)-2-isopropylmalate + CoA + H(+). It participates in amino-acid biosynthesis; L-leucine biosynthesis; L-leucine from 3-methyl-2-oxobutanoate: step 1/4. In terms of biological role, catalyzes the condensation of the acetyl group of acetyl-CoA with 3-methyl-2-oxobutanoate (2-ketoisovalerate) to form 3-carboxy-3-hydroxy-4-methylpentanoate (2-isopropylmalate). This is 2-isopropylmalate synthase from Klebsiella pneumoniae subsp. pneumoniae (strain ATCC 700721 / MGH 78578).